The primary structure comprises 228 residues: Octanoyltransferase (228 aa).

In terms of domain architecture, BPL/LPL catalytic spans 30-214 (KKIGDTLLLL…YFGKVFGKSL (185 aa)). Residues 75–82 (RGGDVTYH), 144–146 (AIG), and 157–159 (GFA) each bind substrate. Cysteine 175 (acyl-thioester intermediate) is an active-site residue.

Belongs to the LipB family.

Its subcellular location is the cytoplasm. It catalyses the reaction octanoyl-[ACP] + L-lysyl-[protein] = N(6)-octanoyl-L-lysyl-[protein] + holo-[ACP] + H(+). It participates in protein modification; protein lipoylation via endogenous pathway; protein N(6)-(lipoyl)lysine from octanoyl-[acyl-carrier-protein]: step 1/2. Functionally, catalyzes the transfer of endogenously produced octanoic acid from octanoyl-acyl-carrier-protein onto the lipoyl domains of lipoate-dependent enzymes. Lipoyl-ACP can also act as a substrate although octanoyl-ACP is likely to be the physiological substrate. The polypeptide is Octanoyltransferase (Caldicellulosiruptor bescii (strain ATCC BAA-1888 / DSM 6725 / KCTC 15123 / Z-1320) (Anaerocellum thermophilum)).